A 76-amino-acid polypeptide reads, in one-letter code: Sec-independent protein translocase protein TatA (76 aa).

Residues 1-21 traverse the membrane as a helical segment; sequence MLGGLTGWHLLIILAVILLLF. Positions 44–57 are enriched in basic and acidic residues; sequence VNEMKKDGDKDKGE. The disordered stretch occupies residues 44–76; the sequence is VNEMKKDGDKDKGEGGSTAPATDTGASSEQNSK. Over residues 62–76 the composition is skewed to polar residues; it reads APATDTGASSEQNSK.

Belongs to the TatA/E family. The Tat system comprises two distinct complexes: a TatABC complex, containing multiple copies of TatA, TatB and TatC subunits, and a separate TatA complex, containing only TatA subunits. Substrates initially bind to the TatABC complex, which probably triggers association of the separate TatA complex to form the active translocon.

The protein resides in the cell membrane. Functionally, part of the twin-arginine translocation (Tat) system that transports large folded proteins containing a characteristic twin-arginine motif in their signal peptide across membranes. TatA could form the protein-conducting channel of the Tat system. In Leifsonia xyli subsp. xyli (strain CTCB07), this protein is Sec-independent protein translocase protein TatA.